The chain runs to 118 residues: MSEFAPICIYLVISLLVSLIPLGVPFPFASNSSTYPDKLSAYECGFDPSGDARSRFDIRFYLVSILFIIPDPEVTFSFPWAVPPNKIDPFGSWSMMAFLLILTIGSLYEWKRGASDRE.

Transmembrane regions (helical) follow at residues 4–24 (FAPI…PLGV) and 87–107 (IDPF…IGSL).

Belongs to the complex I subunit 3 family.

It localises to the mitochondrion membrane. The enzyme catalyses a ubiquinone + NADH + 5 H(+)(in) = a ubiquinol + NAD(+) + 4 H(+)(out). In terms of biological role, core subunit of the mitochondrial membrane respiratory chain NADH dehydrogenase (Complex I) that is believed to belong to the minimal assembly required for catalysis. Complex I functions in the transfer of electrons from NADH to the respiratory chain. The immediate electron acceptor for the enzyme is believed to be ubiquinone. This is NADH-ubiquinone oxidoreductase chain 3 (ND3) from Panax ginseng (Korean ginseng).